Reading from the N-terminus, the 151-residue chain is DNA-directed RNA polymerase RPB6 homolog (151 aa).

The segment covering Glu-20 to Val-44 has biased composition (acidic residues). Residues Glu-20 to Ser-46 form a disordered region.

Belongs to the archaeal RpoK/eukaryotic RPB6 RNA polymerase subunit family. Part of the viral DNA-directed RNA polymerase that consists of 8 polII-like subunits (RPB1, RPB2, RPB3, RPB5, RPB6, RPB7, RPB9, RPB10), a capping enzyme and a termination factor.

It is found in the host cytoplasm. Its subcellular location is the virion. Its function is as follows. Component of the DNA-directed RNA polymerase (RNAP) that catalyzes the transcription in the cytoplasm of viral DNA into RNA using the four ribonucleoside triphosphates as substrates. This is DNA-directed RNA polymerase RPB6 homolog from African swine fever virus (isolate Tick/Malawi/Lil 20-1/1983) (ASFV).